Consider the following 351-residue polypeptide: MRKIIHVDMDCFFAAVEMRDNPALRDIPIAIGGSRERRGVISTANYPARKFGVRSAMPTGMALKLCPHLTLLPGRFDAYKEASNHIREIFSRYTSRIEPLSLDEAYLDVTDSVHCHGSATLIAQEIRQTIFNELQLTASAGVAPVKFLAKIASDMNKPNGQFVITPAEVPAFLQTLPLAKIPGVGKVSAAKLEAMGLRTCGDVQKCDLVMLLKRFGKFGRILWERSQGIDERDVNSERLRKSVGVERTMAEDIHHWSECEAIIERLYPELERRLAKVKPDLLIARQGVKLKFDDFQQTTQEHVWPRLNKADLIATARKTWDERRGGRGVRLVGLHVTLLDPQMERQLVLGL.

One can recognise a UmuC domain in the interval 4–185 (IIHVDMDCFF…LPLAKIPGVG (182 aa)). Residues aspartate 8 and aspartate 103 each coordinate Mg(2+). Glutamate 104 is an active-site residue.

It belongs to the DNA polymerase type-Y family. As to quaternary structure, monomer. The cofactor is Mg(2+).

The protein localises to the cytoplasm. It carries out the reaction DNA(n) + a 2'-deoxyribonucleoside 5'-triphosphate = DNA(n+1) + diphosphate. Poorly processive, error-prone DNA polymerase involved in untargeted mutagenesis. Copies undamaged DNA at stalled replication forks, which arise in vivo from mismatched or misaligned primer ends. These misaligned primers can be extended by PolIV. Exhibits no 3'-5' exonuclease (proofreading) activity. May be involved in translesional synthesis, in conjunction with the beta clamp from PolIII. The protein is DNA polymerase IV of Escherichia coli (strain ATCC 8739 / DSM 1576 / NBRC 3972 / NCIMB 8545 / WDCM 00012 / Crooks).